The following is a 422-amino-acid chain: UDP-N-acetylmuramoylalanine--D-glutamate ligase (422 aa).

ATP is bound at residue 102–108; sequence GTNGKTT.

Belongs to the MurCDEF family.

The protein localises to the cytoplasm. It catalyses the reaction UDP-N-acetyl-alpha-D-muramoyl-L-alanine + D-glutamate + ATP = UDP-N-acetyl-alpha-D-muramoyl-L-alanyl-D-glutamate + ADP + phosphate + H(+). Its pathway is cell wall biogenesis; peptidoglycan biosynthesis. In terms of biological role, cell wall formation. Catalyzes the addition of glutamate to the nucleotide precursor UDP-N-acetylmuramoyl-L-alanine (UMA). The sequence is that of UDP-N-acetylmuramoylalanine--D-glutamate ligase from Helicobacter pylori (strain J99 / ATCC 700824) (Campylobacter pylori J99).